A 429-amino-acid chain; its full sequence is Ribosomal RNA small subunit methyltransferase B (429 aa).

S-adenosyl-L-methionine-binding positions include 254–260 (CAAPGGK), Asp-277, Asp-303, and Asp-322. The active-site Nucleophile is the Cys-375. The segment at 397-419 (ALSETGTPDQPGQQNLPGGEEGD) is disordered. The segment covering 400 to 412 (ETGTPDQPGQQNL) has biased composition (polar residues).

It belongs to the class I-like SAM-binding methyltransferase superfamily. RsmB/NOP family.

The protein resides in the cytoplasm. It catalyses the reaction cytidine(967) in 16S rRNA + S-adenosyl-L-methionine = 5-methylcytidine(967) in 16S rRNA + S-adenosyl-L-homocysteine + H(+). Its function is as follows. Specifically methylates the cytosine at position 967 (m5C967) of 16S rRNA. The sequence is that of Ribosomal RNA small subunit methyltransferase B from Salmonella enteritidis PT4 (strain P125109).